Here is a 999-residue protein sequence, read N- to C-terminus: Protein Smaug (999 aa).

Polar residues predominate over residues Met1 to Pro36. Disordered stretches follow at residues Met1–Pro69 and Leu329–Pro349. Low complexity-rich tracts occupy residues Thr44 to Pro69 and Leu329 to Ser338. Residues Ser564 and Ser575 each carry the phosphoserine modification. Positions Glu583–Met763 are interaction with cup. In terms of domain architecture, SAM spans Gly600–Lys654. 2 disordered regions span residues His773–Met892 and Gln955–Pro977. 2 stretches are compositionally biased toward polar residues: residues Lys801–Leu822 and His854–Pro864. Position 972 is a phosphoserine (Ser972).

This sequence belongs to the SMAUG family. Interacts with oskar (osk). Binds to the 3'-UTR of nanos (nos). Interacts with cup, which in turn recruits eIF4-E, leading to an indirect interaction between smg and eIF4-E that prevents mRNA translation. Forms a complex with aub, twin, AGO3, nanos mRNA and piRNAs that targets the nanos 3'-untranslated region, in early embryos. In terms of tissue distribution, at syncytial blastoderm, it is located throughout the bulk cytoplasm and pole plasm. By the time of cellularization, it concentrates at the posterior pole.

The protein resides in the cytoplasm. Its function is as follows. Translation regulator that binds to the 3'-UTR of specific mRNAs such as nanos (nos) and prevents their translation. Prevents translation of unlocalized nanos in the bulk cytoplasm via the recruitment of cup. This is Protein Smaug (smg) from Drosophila melanogaster (Fruit fly).